The primary structure comprises 248 residues: Aspartate/glutamate leucyltransferase (248 aa).

This sequence belongs to the R-transferase family. Bpt subfamily.

It localises to the cytoplasm. It catalyses the reaction N-terminal L-glutamyl-[protein] + L-leucyl-tRNA(Leu) = N-terminal L-leucyl-L-glutamyl-[protein] + tRNA(Leu) + H(+). It carries out the reaction N-terminal L-aspartyl-[protein] + L-leucyl-tRNA(Leu) = N-terminal L-leucyl-L-aspartyl-[protein] + tRNA(Leu) + H(+). In terms of biological role, functions in the N-end rule pathway of protein degradation where it conjugates Leu from its aminoacyl-tRNA to the N-termini of proteins containing an N-terminal aspartate or glutamate. The polypeptide is Aspartate/glutamate leucyltransferase (Polynucleobacter asymbioticus (strain DSM 18221 / CIP 109841 / QLW-P1DMWA-1) (Polynucleobacter necessarius subsp. asymbioticus)).